The chain runs to 306 residues: Ribonuclease Z (306 aa).

Positions 63, 65, 67, 68, 140, 211, and 269 each coordinate Zn(2+). D67 acts as the Proton acceptor in catalysis.

It belongs to the RNase Z family. As to quaternary structure, homodimer. It depends on Zn(2+) as a cofactor.

It carries out the reaction Endonucleolytic cleavage of RNA, removing extra 3' nucleotides from tRNA precursor, generating 3' termini of tRNAs. A 3'-hydroxy group is left at the tRNA terminus and a 5'-phosphoryl group is left at the trailer molecule.. Functionally, zinc phosphodiesterase, which displays some tRNA 3'-processing endonuclease activity. Probably involved in tRNA maturation, by removing a 3'-trailer from precursor tRNA. In Listeria monocytogenes serotype 4b (strain CLIP80459), this protein is Ribonuclease Z.